Here is a 375-residue protein sequence, read N- to C-terminus: Phosphoglycerate kinase (375 aa).

Residues Val-1, Asp-2, Phe-3, Asn-4, Arg-17, Ser-40, His-41, Gly-43, Arg-44, Leu-99, Arg-100, His-147, and Arg-148 each coordinate (2R)-3-phosphoglycerate. ADP is bound at residue Gly-191. Gly-191 contributes to the CDP binding site. Ala-192 and Lys-193 together coordinate AMP. Residue Ala-192 participates in ATP binding. Ala-192 is a binding site for Mg(2+). Residue Asp-196 coordinates CDP. Asp-196 contacts Mg(2+). Lys-197 is an AMP binding site. Position 197 (Lys-197) interacts with ATP. Gly-215 serves as a coordination point for ADP. Gly-215 lines the CDP pocket. The AMP site is built by Gly-216 and Gly-290. ATP is bound by residues Gly-216 and Gly-290. Positions 315 and 320 each coordinate CDP. Phe-320 is an ADP binding site. Glu-321 is an AMP binding site. 3 residues coordinate ATP: Glu-321, Asp-352, and Thr-353. Asp-352 contacts Mg(2+).

The protein belongs to the phosphoglycerate kinase family. As to quaternary structure, monomer. Requires Mg(2+) as cofactor.

The catalysed reaction is (2R)-3-phosphoglycerate + ATP = (2R)-3-phospho-glyceroyl phosphate + ADP. It participates in carbohydrate degradation; glycolysis; pyruvate from D-glyceraldehyde 3-phosphate: step 2/5. The chain is Phosphoglycerate kinase (PGK) from Tetrahymena pyriformis.